Here is a 1157-residue protein sequence, read N- to C-terminus: MKAGHLLWALLLMHSLCSLPTDGAIRNYYLGIQDIQWNYAPKGRNVITNQTLNNDTVASSFLKSGKNRIGGTYKKTVYKEYSDGTYTNEIAKPAWLGFLGPLLKAEMGDVILIHLKNFASRPYTIHPHGVFYEKDSEGSLYPDGSSGYLKADDSVPPGGSHVYNWSIPEGHAPTEADPACLTWIYHSHVDAPRDIATGLIGPLITCKRGTLDGNSPPQRKDVDHNFFLLFSVIDENLSWHLDDNIATYCSDPASVDKEDGPFQDSNRMHAINGFVFGNLPELSMCAQKHVAWHLFGMGNEIDVHTAFFHGQTLSIRGHRTDVAHIFPATFVTAEMVPQKSGTWLISCVVNSHLKSGMQAFYKVDSCSMDPPVEQLTGKVRQYFIQAHEIQWDYGPIGHDGRTGKSLREPGSGPDKYFQKSSSRIGGTYWKVRYEAFQDETFQERLHQEEETHLGILGPVIRAEVGDTIQVVFYNRASQPFSIQPHGVFYEKSSEGTVYNDGTSYPKVAKSFEKVTYYWTVPPHAGPTAEDPACLTWMYFSAADPTRDTNSGLVGPLLVCKAGALGEDGKQKGVDKEFFLLFTIFDENESWYNNANQAAGMLDSRLLSEDVEGFEDSNRMHAINGFLFSNLPRLDICKGDTVAWHLLGLGTENDVHGVMFEGNTLQLQGMRKSAAMLFPHTFVTAIMQPDNPGIFEIYCQAGSHREAGMQAIYNVSQCSSHQDSPRQHYQASRVYYIMAEEIEWDYCPDRSWELEWYNTSEKDSYGHVFLSNKDGLLGSKYKKAVFREYTDGTFRIPQPRSGPEEHLGILGPLIRGEVGDILTVVFKNKASRPYSIHAHGVLESSTGWPQAAEPGEVLTYQWNIPERSGPGPSDSACVSWIYYSAVDPIKDMYSGLVGPLVICRNGILEPNGGRNDMDREFALLFLIFDENQSWYLKENIATYGPQETSHVNLQDATFLESNKMHAINGKLYANLRGLTVYQGERVAWYMLAMGQDTDIHTVHFHAESFLYQNGHSYRADVVDLFPGTFEVVEMVASNPGAWLMHCHVTDHVHAGMETIFTVLSHEEHFSTMTTITKEIGKAVILQNIGEGNVKMLGMNIPVKNVEILSSALIAICVVLLLIALALGGVVWYQHRQRKLRRNRRSILDDSFKLLSLKQ.

The signal sequence occupies residues 1–23 (MKAGHLLWALLLMHSLCSLPTDG). Plastocyanin-like domains are found at residues 24-206 (AIRN…LITC), 218-366 (QRKD…VDSC), 370-559 (PPVE…LLVC), 569-717 (KQKG…VSQC), 730-902 (ASRV…LVIC), and 910-1066 (NGGR…SHEE). Residues 24-1109 (AIRNYYLGIQ…PVKNVEILSS (1086 aa)) are Extracellular-facing. Asn-49 and Asn-54 each carry an N-linked (GlcNAc...) asparagine glycan. Na(+) contacts are provided by Gly-70 and Tyr-73. Cu(2+)-binding residues include His-126 and His-128. Residue His-126 coordinates O2. Lys-134, Asp-152, and Asp-153 together coordinate Ca(2+). The N-linked (GlcNAc...) asparagine glycan is linked to Asn-164. Cys-180 and Cys-206 are joined by a disulfide. Residues His-186 and His-188 each coordinate Cu(2+). His-186 provides a ligand contact to O2. An N-linked (GlcNAc...) asparagine glycan is attached at Asn-236. Residue Ser-265 coordinates Na(+). A disulfide bridge links Cys-285 with Cys-366. His-304, Cys-347, and His-352 together coordinate Cu(2+). Residues Tyr-416, Gly-425, and Tyr-428 each contribute to the Na(+) site. An intrachain disulfide couples Cys-533 to Cys-559. An N-linked (GlcNAc...) asparagine glycan is attached at Asn-587. Ser-616 is a Na(+) binding site. Cysteines 636 and 717 form a disulfide. The Cu(2+) site is built by His-655, Cys-698, His-703, and Met-708. N-linked (GlcNAc...) asparagine glycosylation is found at Asn-713 and Asn-757. The Na(+) site is built by Phe-768 and Gly-777. Residues Cys-876 and Cys-902 are joined by a disulfide bond. An N-linked (GlcNAc...) asparagine glycan is attached at Asn-930. 8 residues coordinate Cu(2+): His-999, His-1002, His-1004, His-1044, Cys-1045, His-1046, His-1050, and Met-1055. Residues His-1002 and His-1004 each contribute to the O2 site. Residue His-1046 coordinates O2. The chain crosses the membrane as a helical span at residues 1110-1130 (ALIAICVVLLLIALALGGVVW). Over 1131–1157 (YQHRQRKLRRNRRSILDDSFKLLSLKQ) the chain is Cytoplasmic. 3 positions are modified to phosphoserine: Ser-1144, Ser-1149, and Ser-1154.

Belongs to the multicopper oxidase family. Part of a complex composed of SLC40A1/ferroportin, TF/transferrin and HEPH/hephaestin that transfers iron from cells to transferrin. It depends on Cu cation as a cofactor. As to expression, highly expressed in small intestine and colon.

The protein resides in the basolateral cell membrane. The enzyme catalyses 4 Fe(2+) + O2 + 4 H(+) = 4 Fe(3+) + 2 H2O. In terms of biological role, plasma membrane ferroxidase that mediates the extracellular conversion of ferrous/Fe(2+) iron into its ferric/Fe(3+) form. Couples ferroportin which specifically exports ferrous/Fe(2+) iron from cells to transferrin that only binds and shuttles extracellular ferric/Fe(3+) iron throughout the body. By helping iron transfer from cells to blood mainly contributes to dietary iron absorption by the intestinal epithelium and more generally regulates iron levels in the body. This Rattus norvegicus (Rat) protein is Hephaestin.